The chain runs to 115 residues: Superoxide reductase (115 aa).

Residues glutamate 14, histidine 16, histidine 41, histidine 47, cysteine 102, and histidine 105 each coordinate Fe cation.

The protein belongs to the desulfoferrodoxin family. Homotetramer. The cofactor is Fe cation.

The enzyme catalyses reduced [rubredoxin] + superoxide + 2 H(+) = oxidized [rubredoxin] + H2O2. Uses electrons from reduced NADP, by way of rubredoxin and an oxidoreductase, to catalyze the reduction of superoxide to hydrogen peroxide. This chain is Superoxide reductase (sorA), found in Pyrococcus abyssi (strain GE5 / Orsay).